The primary structure comprises 264 residues: Thymidylate synthase (264 aa).

Residue arginine 21 coordinates dUMP. Position 51 (histidine 51) interacts with (6R)-5,10-methylene-5,6,7,8-tetrahydrofolate. 126–127 (RR) is a binding site for dUMP. The Nucleophile role is filled by cysteine 146. DUMP is bound by residues 166 to 169 (RSVD), asparagine 177, and 207 to 209 (HLY). Aspartate 169 contributes to the (6R)-5,10-methylene-5,6,7,8-tetrahydrofolate binding site. Serine 263 is a (6R)-5,10-methylene-5,6,7,8-tetrahydrofolate binding site.

This sequence belongs to the thymidylate synthase family. Bacterial-type ThyA subfamily. In terms of assembly, homodimer.

The protein localises to the cytoplasm. The enzyme catalyses dUMP + (6R)-5,10-methylene-5,6,7,8-tetrahydrofolate = 7,8-dihydrofolate + dTMP. It functions in the pathway pyrimidine metabolism; dTTP biosynthesis. Catalyzes the reductive methylation of 2'-deoxyuridine-5'-monophosphate (dUMP) to 2'-deoxythymidine-5'-monophosphate (dTMP) while utilizing 5,10-methylenetetrahydrofolate (mTHF) as the methyl donor and reductant in the reaction, yielding dihydrofolate (DHF) as a by-product. This enzymatic reaction provides an intracellular de novo source of dTMP, an essential precursor for DNA biosynthesis. This Anoxybacillus flavithermus (strain DSM 21510 / WK1) protein is Thymidylate synthase.